The following is a 549-amino-acid chain: MLPPRQQPRPGGLQTSLSLVSPDACGSPNPQERGSTSDQARDSPSESASSRETWPTSDALMLKKLEKEKENGYTEHSVVRNISNSDKMSLRDIARERVDVIAERMRNLPDEYLEKFKHELRVILEGLGGAQHREEFLFLQRLVNSRGDLTDGTLIITHRTQLEILVAIKTGIQAFLHPSVSLSQASLIDIFLYKRCRNIACGSMLPAEECSCEICAKKNGFCNLCMCVICYKFDFEVNSCRWIGCDLCSHWTHTDCAISNGQIGTGPSVKNGASSAETLFRCHACSRTSELLGWVKDVFQHCAPSWDAEAFVRELDYVRRIFQRSEDARGRKLFWKCEELIEKLKNGVADPMACKVILSFFQELDVDPSKSQDNDEGGRLIAPEEAFNKIADVVQEAIRKMEAVAEEKMRMVKKARLALDACDQELKDKAREVTSLKMERQRKKQQIDELESIVRLKQAEADMFDLKAGEARREAERLQRIALAKTEKSEEDYASRYLKQRLSEAEAEKQYLFEKIKLQESSRASQSSAGGNDPSQMMYSKIQDLIKNM.

Residues 1–56 form a disordered region; the sequence is MLPPRQQPRPGGLQTSLSLVSPDACGSPNPQERGSTSDQARDSPSESASSRETWPT. Polar residues-rich tracts occupy residues 28 to 38 and 45 to 56; these read PNPQERGSTSD and SESASSRETWPT. The PHD-type zinc-finger motif lies at 224–288; that stretch reads LCMCVICYKF…LFRCHACSRT (65 aa). A coiled-coil region spans residues 394–520; that stretch reads VQEAIRKMEA…YLFEKIKLQE (127 aa). The segment at 519 to 549 is disordered; the sequence is QESSRASQSSAGGNDPSQMMYSKIQDLIKNM. Residues 521-538 are compositionally biased toward polar residues; it reads SSRASQSSAGGNDPSQMM.

In terms of assembly, self-interacts and probably forms heteromers. Binds to VPg of pea seed borne mosaic virus (PSbMV), turnip mosaic virus (TuMV) and lettuce mosaic virus (LMV), but not with VPg of tobacco etch virus (TEV), cowpea mosaic virus (CPMV), tomato black ring virus (TBRV) and grapevine fan leaf virus (GFLV).

Its subcellular location is the nucleus. Its function is as follows. Required for the maintenance and/or establishment of both the shoot and root meristems, probably by controlling the expression of the meristem genes and of genes required for auxin responses. Involved in the development of the basal pole and in auxin-mediated root and vascular development in the embryo. Confers sensitivity to turnip mosaic virus (TuMV) probably by promoting viral movement and multiplication via interaction with TuMV VPg. The chain is OBERON-like protein (PVIP) from Nicotiana benthamiana.